Reading from the N-terminus, the 373-residue chain is Alginate lyase (373 aa).

Residues 1 to 25 form the signal peptide; it reads MRLPMQKLLIPTLLGLAMFAGSVNA. Substrate contacts are provided by residues 66–67, 139–140, and Y257; these read SK and HT.

Belongs to the polysaccharide lyase 5 family.

Its subcellular location is the periplasm. The catalysed reaction is Eliminative cleavage of alginate to give oligosaccharides with 4-deoxy-alpha-L-erythro-hex-4-enuronosyl groups at their non-reducing ends and beta-D-mannuronate at their reducing end.. In terms of biological role, catalyzes the depolymerization of alginate by cleaving the beta-1,4 glycosidic bond between two adjacent sugar residues via a beta-elimination mechanism. May serve to degrade mislocalized alginate that is trapped in the periplasmic space. The polypeptide is Alginate lyase (Pseudomonas fluorescens).